The primary structure comprises 928 residues: Sodium/calcium exchanger 3 (928 aa).

The signal sequence occupies residues 1–30 (MAWLRLQPLTSAFLHFGLVTFVLFLNCLRA). The Extracellular segment spans residues 31–73 (EAGDSGDVPSAGQNNESCSGSSDCKEGVILPIWYPENPSLGDK). N-linked (GlcNAc...) asparagine glycosylation occurs at N45. The helical transmembrane segment at 74–94 (IARVIVYFVALIYMFLGVSII) threads the bilayer. Topologically, residues 95–147 (ADRFMASIEVITSQEREVTIKKPNGETSTTTIRVWNETVSNLTLMALGSSAPE) are cytoplasmic. The helical transmembrane segment at 148 to 168 (ILLSLIEVCGHGFIAGDLGPS) threads the bilayer. Residue T169 is a topological domain, extracellular. The chain crosses the membrane as a helical span at residues 170–190 (IVGSAAFNMFIIIGICVYVIP). The Cytoplasmic segment spans residues 191–201 (DGETRKIKHLR). A helical membrane pass occupies residues 202 to 222 (VFFVTAAWSIFAYIWLYMILA). The Extracellular segment spans residues 223–230 (VFSPGVVQ). The helical transmembrane segment at 231–251 (VWEGLLTLFFFPVCVLLAWVA) threads the bilayer. Residues 252 to 727 (DKRLLFYKYM…DESGEERLPS (476 aa)) lie on the Cytoplasmic side of the membrane. The interval 253-272 (KRLLFYKYMHKKYRTDKHRG) is putative calmodulin-binding region. 2 Calx-beta domains span residues 390-485 (EPED…VRLS) and 519-618 (ATVT…VIEM). The Ca(2+) site is built by E409, D445, D470, D471, I473, E475, E478, D525, D526, D527, E543, D579, D605, and E673. A helical membrane pass occupies residues 728-748 (CFDYVMHFLTVFWKVLFACVP). The Extracellular portion of the chain corresponds to 749–755 (PTEYCHG). Residues 756 to 776 (WACFVVSILIIGMLTAIIGDL) form a helical membrane-spanning segment. Over 777-779 (ASH) the chain is Cytoplasmic. The helical transmembrane segment at 780-800 (FGCTIGLKDSVTAVVFVAFGT) threads the bilayer. The Extracellular portion of the chain corresponds to 801–829 (SVPDTFASKAAALQDVYADASIGNVTGSN). An N-linked (GlcNAc...) asparagine glycan is attached at N824. The chain crosses the membrane as a helical span at residues 830–850 (AVNVFLGIGLAWSVAAIYWAM). Residues 851–861 (QGQEFHVSAGT) lie on the Cytoplasmic side of the membrane. Residues 862–882 (LAFSVTLFTIFAFVCLSVLLY) form a helical membrane-spanning segment. The Extracellular portion of the chain corresponds to 883-904 (RRRPHLGGELGGPRGCKLATTW). The helical transmembrane segment at 905–925 (LFVSLWLLYILFATLEAYCYI) threads the bilayer. Topologically, residues 926-928 (KGF) are cytoplasmic.

This sequence belongs to the Ca(2+):cation antiporter (CaCA) (TC 2.A.19) family. SLC8 subfamily. Interacts with AKAP1. As to expression, detected in gray and white matter in the spinal cord. Detected in hippocampus neurons. Detected in brain cortex neurons. Detected in skeletal muscle (at protein level). Isoform 1 and isoform 2 are highly expressed in brain; levels are higher for isoform 2. Isoform 1 and isoform 2 are detected in soleus muscle; levels are higher for isoform 1. Detected in gastrocnemius muscle.

It is found in the cell membrane. It localises to the perikaryon. Its subcellular location is the cell projection. The protein resides in the dendrite. The protein localises to the dendritic spine. It is found in the sarcolemma. It localises to the cytoplasm. Its subcellular location is the sarcoplasm. The protein resides in the cell junction. The protein localises to the mitochondrion outer membrane. It is found in the perinuclear region. It localises to the endoplasmic reticulum membrane. It catalyses the reaction Ca(2+)(in) + 3 Na(+)(out) = Ca(2+)(out) + 3 Na(+)(in). With respect to regulation, calcium transport is stimulated by cytoplasmic Ca(2+) and is inhibited by Na(+). Isoform 1 is more sensitive to stimulation by Ca(2+) than isoform 2. Isoform 2 is more sensitive to inactivation by Na(+). In terms of biological role, mediates the electrogenic exchange of Ca(2+) against Na(+) ions across the cell membrane, and thereby contributes to the regulation of cytoplasmic Ca(2+) levels and Ca(2+)-dependent cellular processes. Contributes to cellular Ca(2+) homeostasis in excitable cells, both in muscle and in brain. In a first phase, voltage-gated channels mediate the rapid increase of cytoplasmic Ca(2+) levels due to release of Ca(2+) stores from the endoplasmic reticulum. SLC8A3 mediates the export of Ca(2+) from the cell during the next phase, so that cytoplasmic Ca(2+) levels rapidly return to baseline. Contributes to Ca(2+) transport during excitation-contraction coupling in muscle. In neurons, contributes to the rapid decrease of cytoplasmic Ca(2+) levels back to baseline after neuronal activation, and thereby contributes to modulate synaptic plasticity, learning and memory. Required for normal oligodendrocyte differentiation and for normal myelination. Mediates Ca(2+) efflux from mitochondria and contributes to mitochondrial Ca(2+) ion homeostasis. Isoform 1 displays higher calcium exchanger activity than isoform 2, probably because isoform 1 has a lower threshold for activation by cytoplasmic Ca(2+). This Mus musculus (Mouse) protein is Sodium/calcium exchanger 3.